The sequence spans 355 residues: Protein ATP1B4 (355 aa).

Residues 1 to 108 (MRRQLRSRRA…SLARTGQSWS (108 aa)) lie on the Nuclear side of the membrane. The tract at residues 33 to 77 (ADEEEEAEEEARVMVVPDLEEEEEEEEEKEEEEKEEEDSHSQETD) is disordered. Positions 50–68 (DLEEEEEEEEEKEEEEKEE) are enriched in acidic residues. The chain crosses the membrane as a helical; Signal-anchor for type II membrane protein span at residues 109–129 (LILVIYFFFYASLAAVITLCM). The Perinuclear space portion of the chain corresponds to 130–355 (YTLFLTISPY…RVIFTLNIET (226 aa)).

Belongs to the X(+)/potassium ATPases subunit beta family. As to quaternary structure, associates with a SMAD7-transcriptional complex. Interacts with SNW1 and TOR1AIP1. Does not associate with known Na,K-ATPase alpha-subunits.

The protein resides in the nucleus inner membrane. May act as a transcriptional coregulator during muscle development through its interaction with SNW1. Has lost its ancestral function as a Na,K-ATPase beta-subunit. The chain is Protein ATP1B4 (ATP1B4) from Bos taurus (Bovine).